Consider the following 745-residue polypeptide: Myeloperoxidase (745 aa).

An N-terminal signal peptide occupies residues 1–48 (MGVPFFSSLRCMVDLGPCWAGGLTAEMKLLLALAGLLAILATPQPSEG). A glycan (N-linked (GlcNAc...) asparagine) is linked at asparagine 139. Cysteine 167 and cysteine 180 are oxidised to a cystine. Aspartate 260 lines the heme b pocket. Catalysis depends on histidine 261, which acts as the Proton acceptor. Aspartate 262 contacts Ca(2+). Disulfide bonds link cysteine 281–cysteine 291 and cysteine 285–cysteine 309. Cysteine 316 is modified (cysteine sulfenic acid (-SOH)). N-linked (GlcNAc...) asparagine glycosylation is present at asparagine 323. 4 residues coordinate Ca(2+): threonine 334, phenylalanine 336, aspartate 338, and serine 340. N-linked (GlcNAc...) asparagine glycosylation is found at asparagine 355 and asparagine 391. Cysteine 387 and cysteine 398 are joined by a disulfide. Residues glutamate 408 and methionine 409 each contribute to the heme b site. Residue asparagine 483 is glycosylated (N-linked (GlcNAc...) asparagine). A heme b-binding site is contributed by histidine 502. Cystine bridges form between cysteine 606–cysteine 663 and cysteine 704–cysteine 730. Asparagine 729 carries an N-linked (GlcNAc...) asparagine glycan.

This sequence belongs to the peroxidase family. XPO subfamily. In terms of assembly, homodimer; disulfide-linked. Each monomer consists of a light and a heavy chain. Found in a complex with CP and LTF; interacts directly with CP, which protects CP antioxidant properties by MPO. It depends on Ca(2+) as a cofactor. The cofactor is heme b.

Its subcellular location is the lysosome. It catalyses the reaction chloride + H2O2 + H(+) = hypochlorous acid + H2O. Its function is as follows. Part of the host defense system of polymorphonuclear leukocytes. It is responsible for microbicidal activity against a wide range of organisms. In the stimulated PMN, MPO catalyzes the production of hypohalous acids, primarily hypochlorous acid in physiologic situations, and other toxic intermediates that greatly enhance PMN microbicidal activity. Mediates the proteolytic cleavage of alpha-1-microglobulin to form t-alpha-1-microglobulin, which potently inhibits oxidation of low-density lipoprotein particles and limits vascular damage. This is Myeloperoxidase from Homo sapiens (Human).